Consider the following 952-residue polypeptide: G patch domain-containing protein 1 homolog (952 aa).

6 disordered regions span residues 104-127 (QGIR…QRRR), 165-233 (GWKP…DDYE), 320-345 (DKKP…EDNS), 370-432 (RSRF…KDHS), 660-711 (PEKV…RNKP), and 822-952 (VAPE…KSKH). Positions 107–123 (RTRDEFANEDEQKQRSD) are enriched in basic and acidic residues. Positions 153–199 (RDKVAVRILKSMGWKPGQGVGPRQTRKEKRQATARNSKEQYLMEHYG) constitute a G-patch domain. Positions 214–233 (DSNNEDEDDEDITFAPDDYE) are enriched in acidic residues. The segment covering 323–333 (PKQKKQQHVQQ) has biased composition (basic residues). Composition is skewed to basic and acidic residues over residues 375 to 402 (PMDK…DLNP), 414 to 432 (QEEK…KDHS), and 679 to 691 (IQDK…EPSK). Residues 886–896 (ASSSNESSSSD) are compositionally biased toward low complexity. Composition is skewed to basic residues over residues 906–934 (KLSK…KKSK) and 941–952 (HKAKKKKKKSKH).

Belongs to the GPATCH1 family.

This is G patch domain-containing protein 1 homolog from Drosophila melanogaster (Fruit fly).